The following is a 444-amino-acid chain: MQVTETQKEGLKRAYTITVTAAELDAKVQEKLVEAQPDIEMKGFRKGKVPLAMLKKQFGPRLLGDAMQDAIDGAMRDHLETSGDRPAMQPEVRMVDGETWKEGTDVVVEMKYEALPEIPEIETSKVSLERLVVKADEAAIEEALKNLAESAQNFEDRRKGSKAKDGDQVVIDFKGSVDGELFEGGSAEDYPLVLGSGSFIPGFEEQLVGTKVDDEVTVKVTFPAEYGAKHLAGKEAEFACTVKAVKAPKAAELDDELAKKYGAEDLAALKGQISERLEAEYKGASRAVLKRALLDQLDQMVSFELPSKLVEAEAHQIAHQLWHEEHPEEHGHNHGNIEPTDEHKALAERRVRLGLLLAEIGRKAEVTVTDAEMTQAVLAQARQYPGQERAYFEFVQKNPQIQQQLRAPIFEDKVVDLILEGATVTEKEVGKDDLQKAIEALDEM.

Residues 166 to 251 (GDQVVIDFKG…VKAVKAPKAA (86 aa)) enclose the PPIase FKBP-type domain.

Belongs to the FKBP-type PPIase family. Tig subfamily.

The protein localises to the cytoplasm. It carries out the reaction [protein]-peptidylproline (omega=180) = [protein]-peptidylproline (omega=0). Its function is as follows. Involved in protein export. Acts as a chaperone by maintaining the newly synthesized protein in an open conformation. Functions as a peptidyl-prolyl cis-trans isomerase. In Cereibacter sphaeroides (strain KD131 / KCTC 12085) (Rhodobacter sphaeroides), this protein is Trigger factor.